A 74-amino-acid polypeptide reads, in one-letter code: uncharacterized protein (74 aa).

An N-terminal signal peptide occupies residues 1-19; sequence MIGLIVVPILFAIKGIVVG. The interval 26-74 is disordered; the sequence is KFGKHSNTKDQKEDKDEDKRQSISQRKQHTEWPIEENRIQRRAPNQSAL. 2 stretches are compositionally biased toward basic and acidic residues: residues 32 to 46 and 53 to 64; these read NTKDQKEDKDEDKRQ and QHTEWPIEENRI.

This is an uncharacterized protein from Saccharomyces cerevisiae (strain ATCC 204508 / S288c) (Baker's yeast).